The primary structure comprises 334 residues: Succinylglutamate desuccinylase (334 aa).

Positions 59, 62, and 151 each coordinate Zn(2+). The active site involves glutamate 215.

This sequence belongs to the AspA/AstE family. Succinylglutamate desuccinylase subfamily. The cofactor is Zn(2+).

The enzyme catalyses N-succinyl-L-glutamate + H2O = L-glutamate + succinate. Its pathway is amino-acid degradation; L-arginine degradation via AST pathway; L-glutamate and succinate from L-arginine: step 5/5. Functionally, transforms N(2)-succinylglutamate into succinate and glutamate. In Pseudomonas fluorescens (strain SBW25), this protein is Succinylglutamate desuccinylase.